A 187-amino-acid polypeptide reads, in one-letter code: UPF0340 protein SP_0663 (187 aa).

The protein belongs to the UPF0340 family.

The sequence is that of UPF0340 protein SP_0663 from Streptococcus pneumoniae serotype 4 (strain ATCC BAA-334 / TIGR4).